The sequence spans 324 residues: MDGLEENGSVVQVGDLLPCKICGRTFFPLALKKHGPICQKTATKKRKTFDSSRQRAEGTDIPTVKPLKPRPEPPKKPSNWRRKHEEFIATIRAAKGLDQALKEGGKLPPPPPPSYDPDYIQCPYCQRRFNENAADRHINFCKEQAARISNKGKFSTDSKGKPASRPQYKPSPLKKSNPPGIPSSGSSRLPQPSTTSKTIVGVPTGKASSVNSPLGNKPQTLSPSHRAIAAPQAGANTKARNTTPPSLARNSVAGVLTNKRKTLTENYAARPDGDYTSSVNGGNSKGIEGNSSGHLPKFCHECGTKYPVEWAKFCCECGIRRMIL.

Residues 15–44 (DLLPCKICGRTFFPLALKKHGPICQKTATK) form a C2HC/C3H-type 1 zinc finger. Zn(2+)-binding residues include Cys19, Cys22, His34, and Cys38. The segment at 43–83 (TKKRKTFDSSRQRAEGTDIPTVKPLKPRPEPPKKPSNWRRK) is disordered. Over residues 48–58 (TFDSSRQRAEG) the composition is skewed to basic and acidic residues. Residues 118 to 147 (DYIQCPYCQRRFNENAADRHINFCKEQAAR) form a C2HC/C3H-type 2 zinc finger. Zn(2+)-binding residues include Cys122, Cys125, His137, and Cys141. A disordered region spans residues 149–225 (SNKGKFSTDS…NKPQTLSPSH (77 aa)). Over residues 176-187 (SNPPGIPSSGSS) the composition is skewed to low complexity. Composition is skewed to polar residues over residues 188-198 (RLPQPSTTSKT) and 206-223 (KASSVNSPLGNKPQTLSP). Ser222 carries the post-translational modification Phosphoserine. Thr243 bears the Phosphothreonine mark. Ser291 bears the Phosphoserine mark.

The protein belongs to the ZC2HC1 family. Zn(2+) is required as a cofactor.

In Mus musculus (Mouse), this protein is Zinc finger C2HC domain-containing protein 1A (Zc2hc1a).